We begin with the raw amino-acid sequence, 489 residues long: Topoisomerase I damage affected protein 11 (489 aa).

5 disordered regions span residues 1 to 199 (MDQK…QSMA), 263 to 321 (INVS…DDNK), 344 to 370 (ERTLNWDEPPTPVEETEENQEGDKSVS), 391 to 413 (EDGHHTQQSNSNVNRPKNTHGQV), and 439 to 477 (DDNSDTHLKQRSGRTAVRKTKSGNKLNFVDDSDDGDSTL). The segment covering 19–35 (DTSSRYTTGSISPQFAS) has biased composition (polar residues). A compositionally biased stretch (basic and acidic residues) spans 73 to 89 (EESHNHPLKEDKSESRQ). Polar residues-rich tracts occupy residues 90–103 (RQVSVSNSNPSSKG), 128–147 (PQSQSNVASGNSANKNNLHP), and 156–167 (NATTQTPSSMSM). The span at 182 to 197 (SSKRNSMHSRTSSSQS) shows a compositional bias: low complexity. The stretch at 210–266 (VNALLQSLANKELELLECKRKIDDLKKQLHMEENIYQNKANELQELKNKVSKNINVS) forms a coiled coil. Positions 263–281 (INVSGSNQPVFNKTSTTGR) are enriched in polar residues. Over residues 396–411 (TQQSNSNVNRPKNTHG) the composition is skewed to polar residues. Basic residues predominate over residues 447 to 460 (KQRSGRTAVRKTKS). Positions 468 to 477 (DDSDDGDSTL) are enriched in acidic residues.

Belongs to the TDA11 family.

It is found in the cytoplasm. In Candida glabrata (strain ATCC 2001 / BCRC 20586 / JCM 3761 / NBRC 0622 / NRRL Y-65 / CBS 138) (Yeast), this protein is Topoisomerase I damage affected protein 11 (TDA11).